Reading from the N-terminus, the 174-residue chain is MALGSNTKFYETPNHPFQGERIAEEGDLLSRYGLVNKEELWRAQSELRDYRREARRLIGEAQGDTVAAAEAGSEFLARLKRIGVLDDEDSLDDILSLDVTDILERRLQTVAYRKGLGNTPQQARQFIAHGHVTVNGARVSAPSYKVDVAEEGEIEFDETSPLADDLHPERAEGQ.

The S4 RNA-binding domain occupies 105 to 169 (RRLQTVAYRK…SPLADDLHPE (65 aa)).

This sequence belongs to the universal ribosomal protein uS4 family. As to quaternary structure, part of the 30S ribosomal subunit. Contacts protein S5. The interaction surface between S4 and S5 is involved in control of translational fidelity.

Its function is as follows. One of the primary rRNA binding proteins, it binds directly to 16S rRNA where it nucleates assembly of the body of the 30S subunit. In terms of biological role, with S5 and S12 plays an important role in translational accuracy. The chain is Small ribosomal subunit protein uS4 from Natronomonas pharaonis (strain ATCC 35678 / DSM 2160 / CIP 103997 / JCM 8858 / NBRC 14720 / NCIMB 2260 / Gabara) (Halobacterium pharaonis).